A 213-amino-acid polypeptide reads, in one-letter code: Glycerol-3-phosphate acyltransferase (213 aa).

A run of 6 helical transmembrane segments spans residues 3 to 23 (ILLL…LWIG), 55 to 75 (ITFL…IWLG), 80 to 100 (SPLI…FTGF), 110 to 130 (AGVL…VFAL), 142 to 162 (SITA…IHFL), and 163 to 183 (LDGY…VIIF).

Belongs to the PlsY family. As to quaternary structure, probably interacts with PlsX.

It localises to the cell membrane. The enzyme catalyses an acyl phosphate + sn-glycerol 3-phosphate = a 1-acyl-sn-glycero-3-phosphate + phosphate. It functions in the pathway lipid metabolism; phospholipid metabolism. Catalyzes the transfer of an acyl group from acyl-phosphate (acyl-PO(4)) to glycerol-3-phosphate (G3P) to form lysophosphatidic acid (LPA). This enzyme utilizes acyl-phosphate as fatty acyl donor, but not acyl-CoA or acyl-ACP. The protein is Glycerol-3-phosphate acyltransferase of Streptococcus thermophilus (strain CNRZ 1066).